A 261-amino-acid polypeptide reads, in one-letter code: Cytochrome c oxidase subunit 3 (261 aa).

The Mitochondrial matrix segment spans residues 1–15 (MTHQTHAYHMVNPSP). The helical transmembrane segment at 16–33 (WPLTGAFSALLLTSGLVM) threads the bilayer. Topologically, residues 34–38 (WFHYN) are mitochondrial intermembrane. The helical transmembrane segment at 39-62 (SITLLTLGLLTNILTMYQWWRDVI) threads the bilayer. Residues 63–77 (REGTYQGHHTPIVQK) lie on the Mitochondrial matrix side of the membrane. A helical membrane pass occupies residues 78–99 (GLRYGMILFIVSEVFFFAGFFW). The Mitochondrial intermembrane segment spans residues 100–129 (AFYHSSLVPTHDLGGCWPPTGISPLNPLEV). Residues 130 to 150 (PLLNTSVLLASGVSITWAHHS) form a helical membrane-spanning segment. The Mitochondrial matrix portion of the chain corresponds to 151-156 (LMEGKR). Residues 157 to 178 (NHMNQALLITIMLGLYFTILQA) form a helical membrane-spanning segment. The Mitochondrial intermembrane segment spans residues 179–198 (SEYFETSFSISDGIYGSTFF). Residues 199–224 (MATGFHGLHVIIGSTFLIVCLLRQLK) traverse the membrane as a helical segment. Over 225 to 232 (FHFTSKHH) the chain is Mitochondrial matrix. The chain crosses the membrane as a helical span at residues 233–255 (FGFEAAAWYWHFVDVVWLFLYVS). At 256 to 261 (IYWWGS) the chain is on the mitochondrial intermembrane side.

Belongs to the cytochrome c oxidase subunit 3 family. Component of the cytochrome c oxidase (complex IV, CIV), a multisubunit enzyme composed of 14 subunits. The complex is composed of a catalytic core of 3 subunits MT-CO1, MT-CO2 and MT-CO3, encoded in the mitochondrial DNA, and 11 supernumerary subunits COX4I, COX5A, COX5B, COX6A, COX6B, COX6C, COX7A, COX7B, COX7C, COX8 and NDUFA4, which are encoded in the nuclear genome. The complex exists as a monomer or a dimer and forms supercomplexes (SCs) in the inner mitochondrial membrane with NADH-ubiquinone oxidoreductase (complex I, CI) and ubiquinol-cytochrome c oxidoreductase (cytochrome b-c1 complex, complex III, CIII), resulting in different assemblies (supercomplex SCI(1)III(2)IV(1) and megacomplex MCI(2)III(2)IV(2)).

The protein localises to the mitochondrion inner membrane. It catalyses the reaction 4 Fe(II)-[cytochrome c] + O2 + 8 H(+)(in) = 4 Fe(III)-[cytochrome c] + 2 H2O + 4 H(+)(out). Component of the cytochrome c oxidase, the last enzyme in the mitochondrial electron transport chain which drives oxidative phosphorylation. The respiratory chain contains 3 multisubunit complexes succinate dehydrogenase (complex II, CII), ubiquinol-cytochrome c oxidoreductase (cytochrome b-c1 complex, complex III, CIII) and cytochrome c oxidase (complex IV, CIV), that cooperate to transfer electrons derived from NADH and succinate to molecular oxygen, creating an electrochemical gradient over the inner membrane that drives transmembrane transport and the ATP synthase. Cytochrome c oxidase is the component of the respiratory chain that catalyzes the reduction of oxygen to water. Electrons originating from reduced cytochrome c in the intermembrane space (IMS) are transferred via the dinuclear copper A center (CU(A)) of subunit 2 and heme A of subunit 1 to the active site in subunit 1, a binuclear center (BNC) formed by heme A3 and copper B (CU(B)). The BNC reduces molecular oxygen to 2 water molecules using 4 electrons from cytochrome c in the IMS and 4 protons from the mitochondrial matrix. The sequence is that of Cytochrome c oxidase subunit 3 (mt-Co3) from Mus musculus (Mouse).